An 82-amino-acid chain; its full sequence is ATP synthase subunit c (82 aa).

Transmembrane regions (helical) follow at residues 3–23 (PLIASASVLAAALAIGLASLG) and 57–77 (LAFMESLTIYGLVIALVLLFA).

As to quaternary structure, F-type ATPases have 2 components, F(1) - the catalytic core - and F(0) - the membrane proton channel. F(1) has five subunits: alpha(3), beta(3), gamma(1), delta(1), epsilon(1). F(0) has four main subunits: a(1), b(1), b'(1) and c(10-14). The alpha and beta chains form an alternating ring which encloses part of the gamma chain. F(1) is attached to F(0) by a central stalk formed by the gamma and epsilon chains, while a peripheral stalk is formed by the delta, b and b' chains.

The protein localises to the cellular thylakoid membrane. With respect to regulation, inhibited by dicyclohexylcarbodiimide. F(1)F(0) ATP synthase produces ATP from ADP in the presence of a proton or sodium gradient. F-type ATPases consist of two structural domains, F(1) containing the extramembraneous catalytic core and F(0) containing the membrane proton channel, linked together by a central stalk and a peripheral stalk. During catalysis, ATP synthesis in the catalytic domain of F(1) is coupled via a rotary mechanism of the central stalk subunits to proton translocation. In terms of biological role, key component of the F(0) channel; it plays a direct role in translocation across the membrane. A homomeric c-ring of between 10-14 subunits forms the central stalk rotor element with the F(1) delta and epsilon subunits. Its function is as follows. The complex from the organism is particularly stable to disruption and remains functional after 6 hrs at 55 degrees Celsius. The chain is ATP synthase subunit c (atpE) from Thermosynechococcus vestitus (strain NIES-2133 / IAM M-273 / BP-1).